Consider the following 396-residue polypeptide: OTU domain-containing protein 3 (396 aa).

The disordered stretch occupies residues 1–49; it reads MSRKQAAKSRPGSGGRRAEAERKRDERAARRALAKERRNRPDPGGSGCE. The segment covering 16 to 41 has biased composition (basic and acidic residues); it reads RRAEAERKRDERAARRALAKERRNRP. One can recognise an OTU domain in the interval 64-188; it reads LKLREVPGDG…GEHYDSVRRI (125 aa). N6-acetyllysine is present on K65. The cys-loop stretch occupies residues 69 to 75; sequence VPGDGNC. Residue D72 is part of the active site. C75 (nucleophile) is an active-site residue. N6-acetyllysine occurs at positions 121 and 128. Residues 126-136 form a variable-loop region; it reads LSKPGTFAGND. Residues 176–181 are his-loop; that stretch reads YRYGEH. H181 is an active-site residue. Position 219 is an N6-acetyllysine (K219). The region spanning 229–269 is the UBA-like domain; sequence DDVEDAVHKVGSATGCTDFNLIVQNLEAENYNIKSAITALL. Residues 275–381 form a disordered region; the sequence is TGNDAEENHE…RDTGRSEADM (107 aa). 3 stretches are compositionally biased toward basic and acidic residues: residues 280–301, 312–331, and 343–379; these read EENH…EAGS, NEGR…ESKA, and QRRE…RSEA. K290 is subject to N6-acetyllysine.

In terms of processing, glucose and fatty acids stimulate CREBBP-dependent acetylation, promoting its nuclear translocation.

The protein resides in the cytoplasm. The protein localises to the nucleus. The enzyme catalyses Thiol-dependent hydrolysis of ester, thioester, amide, peptide and isopeptide bonds formed by the C-terminal Gly of ubiquitin (a 76-residue protein attached to proteins as an intracellular targeting signal).. In terms of biological role, deubiquitinating enzyme that hydrolyzes 'Lys-6'- and 'Lys-11'-linked polyubiquitin. Also hydrolyzes heterotypic (mixed and branched) and homotypic chains. Important regulator of energy metabolism. Glucose and fatty acids trigger its nuclear translocation by CBP-dependent acetylation. In the nucleus, deubiquitinates and stabilizes the nuclear receptor PPARD regulating the expression of various genes involved in glucose and lipid metabolism and oxidative phosphorylation. Also acts as a negative regulator of the ribosome quality control (RQC) by mediating deubiquitination of 40S ribosomal proteins RPS10/eS10 and RPS20/uS10, thereby antagonizing ZNF598-mediated 40S ubiquitination. This chain is OTU domain-containing protein 3 (Otud3), found in Mus musculus (Mouse).